Consider the following 317-residue polypeptide: Retinol dehydrogenase 16 (317 aa).

33–57 (FITGCDSGFGNLLARQLDRRGMRVL) contributes to the NAD(+) binding site. A substrate-binding site is contributed by Ser164. Tyr176 (proton acceptor) is an active-site residue. The helical transmembrane segment at 289–308 (FFYLPMSYLPTFLVDALFYW) threads the bilayer.

This sequence belongs to the short-chain dehydrogenases/reductases (SDR) family. As to quaternary structure, homodimer. Post-translationally, not N-glycosylated. As to expression, liver &gt; kidney &gt; brain &gt; lung &gt; testis.

Its subcellular location is the microsome membrane. It localises to the endoplasmic reticulum membrane. It catalyses the reaction all-trans-retinol--[retinol-binding protein] + NAD(+) = all-trans-retinal--[retinol-binding protein] + NADH + H(+). It carries out the reaction all-trans-retinol + NAD(+) = all-trans-retinal + NADH + H(+). The enzyme catalyses 13-cis-retinol + NAD(+) = 13-cis-retinal + NADH + H(+). The catalysed reaction is 11-cis-retinol + NAD(+) = 11-cis-retinal + NADH + H(+). It catalyses the reaction 9-cis-retinol + NAD(+) = 9-cis-retinal + NADH + H(+). It carries out the reaction 5alpha-androstane-3alpha,17beta-diol + NAD(+) = 17beta-hydroxy-5alpha-androstan-3-one + NADH + H(+). The enzyme catalyses androsterone + NAD(+) = 5alpha-androstan-3,17-dione + NADH + H(+). It functions in the pathway cofactor metabolism; retinol metabolism. Its function is as follows. Oxidoreductase with a preference for NAD. Oxidizes all-trans-retinol, 9-cis-retinol, 11-cis-retinol and 13-cis-retinol to the corresponding aldehydes. Has higher activity towards CRBP-bound retinol than with free retinol. Oxidizes 3-alpha-hydroxysteroids. Oxidizes androstanediol and androsterone to dihydrotestosterone and androstanedione. Can also catalyze the reverse reaction. In Rattus norvegicus (Rat), this protein is Retinol dehydrogenase 16.